Here is a 159-residue protein sequence, read N- to C-terminus: SsrA-binding protein (159 aa).

Positions 137–159 (DKRETEKQRDWSREKGRLLKERG) are disordered.

It belongs to the SmpB family.

It localises to the cytoplasm. Required for rescue of stalled ribosomes mediated by trans-translation. Binds to transfer-messenger RNA (tmRNA), required for stable association of tmRNA with ribosomes. tmRNA and SmpB together mimic tRNA shape, replacing the anticodon stem-loop with SmpB. tmRNA is encoded by the ssrA gene; the 2 termini fold to resemble tRNA(Ala) and it encodes a 'tag peptide', a short internal open reading frame. During trans-translation Ala-aminoacylated tmRNA acts like a tRNA, entering the A-site of stalled ribosomes, displacing the stalled mRNA. The ribosome then switches to translate the ORF on the tmRNA; the nascent peptide is terminated with the 'tag peptide' encoded by the tmRNA and targeted for degradation. The ribosome is freed to recommence translation, which seems to be the essential function of trans-translation. The sequence is that of SsrA-binding protein from Mesorhizobium japonicum (strain LMG 29417 / CECT 9101 / MAFF 303099) (Mesorhizobium loti (strain MAFF 303099)).